Consider the following 132-residue polypeptide: MSAPAPVPDVDGVLARASFADDGLLPAVIQQHDTREVLMLGYMDREALRRTLTTGRVTFWSRSRREYWRKGDTSGHGQYVRDAALDCDGDTVLIQVDQVGVACHTGTRTCFDADHLHPVTGARPAADEGPTP.

Residue aspartate 86 coordinates Mg(2+). Cysteine 87 is a binding site for Zn(2+). Positions 88 and 90 each coordinate Mg(2+). The Zn(2+) site is built by cysteine 103 and cysteine 110.

It belongs to the PRA-CH family. Homodimer. It depends on Mg(2+) as a cofactor. Requires Zn(2+) as cofactor.

Its subcellular location is the cytoplasm. It carries out the reaction 1-(5-phospho-beta-D-ribosyl)-5'-AMP + H2O = 1-(5-phospho-beta-D-ribosyl)-5-[(5-phospho-beta-D-ribosylamino)methylideneamino]imidazole-4-carboxamide. Its pathway is amino-acid biosynthesis; L-histidine biosynthesis; L-histidine from 5-phospho-alpha-D-ribose 1-diphosphate: step 3/9. Functionally, catalyzes the hydrolysis of the adenine ring of phosphoribosyl-AMP. This Clavibacter michiganensis subsp. michiganensis (strain NCPPB 382) protein is Phosphoribosyl-AMP cyclohydrolase.